Here is a 588-residue protein sequence, read N- to C-terminus: MLRSWIGSGTLRSLCARRLTRSSLPSPKASFSSAPNRYLQPPTSADRVPLRKQLKQEAKALRSHKKQRKETEEASRQEWELTVGVEIHAQLDTEAKLFSRAPTSTSETPNSNVALFDLAFPGSQPEFQIATLLPALRAAIALNCEIQPVSRFDRKHYFYQDQPAGYQITQYYEPFARNGYVDLFDYDGIAPEDGERVRIDIKQLQLEQDTAKSQEYPPSTQLLDFNRVSHPLIEIITMPQIHTPATAAACVRKLQAIVQSCGAVTTGMEMGGLRADVNVSVRRRGEAAGQHQYDGITGLGQRTEIKNLSSFKAVEDAIIAEKNRQIEVLESGGVIEGETRGWAIGSTETRRLRGKEGSVDYRYMPDPDIPPLIIGEDLLSRLRESLPTAPDALLTLLVGSEFNLPIEDAKPLIELDDGARLEYYHDVVDILRSLQVDRDDKTRAGLARVASNWVLHELGGLLTKADQAWDAEVVPTRSLAHLIDHLQRKLITGPTAKQVLATIFDGDHRPVPQLLEEENLLLRPLSREEYIALAESVIALNPQMVEQIRSKNQLGKLGWFVGQMMRTGEKGRVEAPKAEEILRELILG.

The N-terminal 109 residues, 1–109 (MLRSWIGSGT…RAPTSTSETP (109 aa)), are a transit peptide targeting the mitochondrion. Residues 22 to 35 (SSLPSPKASFSSAP) are compositionally biased toward low complexity. A disordered region spans residues 22 to 50 (SSLPSPKASFSSAPNRYLQPPTSADRVPL).

This sequence belongs to the GatB/GatE family. GatB subfamily. As to quaternary structure, subunit of the heterotrimeric GatCAB amidotransferase (AdT) complex, composed of A, B and C subunits.

The protein localises to the mitochondrion. It carries out the reaction L-glutamyl-tRNA(Gln) + L-glutamine + ATP + H2O = L-glutaminyl-tRNA(Gln) + L-glutamate + ADP + phosphate + H(+). Allows the formation of correctly charged Gln-tRNA(Gln) through the transamidation of misacylated Glu-tRNA(Gln) in the mitochondria. The reaction takes place in the presence of glutamine and ATP through an activated gamma-phospho-Glu-tRNA(Gln). This chain is Glutamyl-tRNA(Gln) amidotransferase subunit B, mitochondrial, found in Penicillium rubens (strain ATCC 28089 / DSM 1075 / NRRL 1951 / Wisconsin 54-1255) (Penicillium chrysogenum).